Consider the following 589-residue polypeptide: (E)-beta-ocimene synthase, chloroplastic (589 aa).

A chloroplast-targeting transit peptide spans 1-25 (MAAHNLCFNSAFVCNVHHQKTQHFP). Residues R302, D339, D343, R480, and N483 each coordinate (2E,6E)-farnesyl diphosphate. 2 residues coordinate Mg(2+): D339 and D343. The DDXXD motif signature appears at 339 to 343 (DDIYD). N483, T487, and E491 together coordinate Mg(2+).

Belongs to the terpene synthase family. Tpsb subfamily. Mg(2+) is required as a cofactor. Mn(2+) serves as cofactor. In terms of tissue distribution, expressed exclusively in flowers.

Its subcellular location is the plastid. The protein resides in the chloroplast. It catalyses the reaction (2E,6E)-farnesyl diphosphate = (3E,6E)-alpha-farnesene + diphosphate. Its pathway is secondary metabolite biosynthesis; terpenoid biosynthesis. In terms of biological role, predominantly involved in monoterpene (C10) biosynthesis. Using GPP as substrate, the major product is (E)-beta-ocimene with minor amounts of (Z)-beta-ocimene and myrcene. Using FPP as substrate, could also be able to synthesize in vitro sesquiterpenes (C15) with (E,E)-alpha-farnesene as the major product and with (Z,E)-alpha-farnesene and (E,E)-beta-farnesene as minor products. In Arabidopsis thaliana (Mouse-ear cress), this protein is (E)-beta-ocimene synthase, chloroplastic (TPS02).